A 1769-amino-acid polypeptide reads, in one-letter code: Gamma-tubulin complex component 6 (1769 aa).

Disordered stretches follow at residues 809–842 (EAQQPQEPPSVFPSTGSQVTSTGPEHAGEGHSCD), 859–881 (STPSVPKSATEGADDSGAGPFST), and 1284–1360 (TVCS…AEAR). The span at 820–831 (FPSTGSQVTSTG) shows a compositional bias: polar residues. Over residues 1314–1326 (PEEKGPGKSRDAE) the composition is skewed to basic and acidic residues. The segment covering 1332–1343 (LPSSSQEDTAVP) has biased composition (polar residues).

The protein belongs to the TUBGCP family. As to quaternary structure, component of the gamma-tubulin ring complex (gTuRC) consisting of TUBGCP2, TUBGCP3, TUBGCP4, TUBGCP5 and TUBGCP6 and gamma-tubulin TUBG1 or TUBG2. TUBGCP2, TUBGCP3, TUBGCP4, TUBGCP5 and TUBGCP6 assemble in a 5:5:2:1:1 stoichiometry; each is associated with a gamma-tubulin, thereby arranging 14 gamma-tubulins in a helical manner. Gamma-tubulin at the first position is blocked by TUBGCP3 at the last position, allowing 13 protafilaments to grow into a microtubule. The gTuRC (via TUBGCP3 and TUBGCP6) interacts with ACTB and MZT1; the interactions form a luminal bridge that stabilizes the initial structure during complex assembly. The gTuRC (via TUBGCP2) interacts with MZT2A/MZT2B and CDK5RAP2 (via CM1 motif); the interactions play a role in gTuRC activation.

It localises to the cytoplasm. The protein resides in the cytoskeleton. Its subcellular location is the microtubule organizing center. It is found in the centrosome. Functionally, component of the gamma-tubulin ring complex (gTuRC) which mediates microtubule nucleation. The gTuRC regulates the minus-end nucleation of alpha-beta tubulin heterodimers that grow into microtubule protafilaments, a critical step in centrosome duplication and spindle formation. This is Gamma-tubulin complex component 6 (Tubgcp6) from Mus musculus (Mouse).